The chain runs to 289 residues: Formamidopyrimidine-DNA glycosylase 1 (289 aa).

Catalysis depends on proline 2, which acts as the Schiff-base intermediate with DNA. Residue glutamate 3 is the Proton donor of the active site. Lysine 61 serves as the catalytic Proton donor; for beta-elimination activity. Positions 100, 119, and 165 each coordinate DNA. The FPG-type zinc finger occupies 251–285; the sequence is DAYGREGENCRRCGAVIRRERFMNRSSFYCPRCQP. The active-site Proton donor; for delta-elimination activity is arginine 275.

This sequence belongs to the FPG family. As to quaternary structure, monomer. Zn(2+) serves as cofactor.

The catalysed reaction is Hydrolysis of DNA containing ring-opened 7-methylguanine residues, releasing 2,6-diamino-4-hydroxy-5-(N-methyl)formamidopyrimidine.. The enzyme catalyses 2'-deoxyribonucleotide-(2'-deoxyribose 5'-phosphate)-2'-deoxyribonucleotide-DNA = a 3'-end 2'-deoxyribonucleotide-(2,3-dehydro-2,3-deoxyribose 5'-phosphate)-DNA + a 5'-end 5'-phospho-2'-deoxyribonucleoside-DNA + H(+). In terms of biological role, involved in base excision repair of DNA damaged by oxidation or by mutagenic agents. Acts as a DNA glycosylase that recognizes and removes damaged bases. Has a preference for oxidized purines, such as 7,8-dihydro-8-oxoguanine (8-oxoG) when paired with C, G or T, as well as methyl-faPy (formanidopyrimidine residues) in poly(dG-dC) and spiroiminodihydantoin:C base pairs. Unlike its E.coli ortholog has no activity on 8-oxoG:A. Has AP (apurinic/apyrimidinic) lyase activity and introduces nicks in the DNA strand. Cleaves the DNA backbone by beta-delta elimination to generate a single-strand break at the site of the removed base with both 3'- and 5'-phosphates. Cleaves ssDNA containing an AP site. Complements the H(2)O(2) sensitivity of an M.smegmatis fpg disruption mutant; upon expression in M.smegmatis excises 8-oxoG from dsDNA. This Mycobacterium tuberculosis (strain ATCC 25618 / H37Rv) protein is Formamidopyrimidine-DNA glycosylase 1 (fpg1).